Consider the following 79-residue polypeptide: Cytoinsectotoxin-3 (79 aa).

It belongs to the cationic peptide 06 (cytoinsectotoxin) family. As to expression, expressed by the venom gland.

The protein resides in the secreted. Functionally, insecticidal and antimicrobial peptide. Has insecticidal activity against larvae of flesh fly S.carnaria. Has antibacterial activity against Gram-positive bacterium B.subtilis B-501 (MIC=0.63 uM) and Gram-negative bacterium E.coli DH5alpha (MIC=2.5 uM). This is Cytoinsectotoxin-3 from Lachesana tarabaevi (Spider).